A 326-amino-acid chain; its full sequence is ELAV-like protein 1-B (326 aa).

3 consecutive RRM domains span residues 20-98, 106-186, and 244-322; these read TNLI…FARP, ANLY…FAAN, and WCIF…FKTS.

Belongs to the RRM elav family. Interacts (via RRM3) with cirbp. Unable to form oligomers. Part of a ribonucleoprotein (RNP) complex, at least composed of elavl1/elrA and/or elavl2/elrB, igf2bp3/vg1RBP, ddx6/Xp54, ybx2/frgy2, lsm14b/rap55b and, in a subset of RNP complexes, stau1/staufen.

It localises to the cytoplasm. The protein localises to the cell cortex. Functionally, RNA-binding protein that binds to the 3'-UTR region of mRNAs and increases their stability. Involved in embryonic stem cells (ESCs) differentiation: preferentially binds mRNAs that are not methylated by N6-methyladenosine (m6A), stabilizing them, promoting ESCs differentiation. Binds to poly-U elements and AU-rich elements (AREs) in the 3'-UTR of target mRNAs. Acts cooperatively with cribp to stabilize AU-rich sequence (ARE)-containing mRNAs. May play a role during gastrulation. Required for the vegetal localization of vg1 mRNA. The chain is ELAV-like protein 1-B (elavl1-b) from Xenopus laevis (African clawed frog).